Consider the following 2149-residue polypeptide: Oxygen-regulated protein 1 (2149 aa).

Residues 1–20 show a composition bias toward polar residues; the sequence is MSDTPSTGFSMIHPTSSEGQ. Positions 1–25 are disordered; that stretch reads MSDTPSTGFSMIHPTSSEGQVPSPR. Residues 36-118 enclose the Doublecortin 1 domain; sequence KRISFYKSGD…GRKVQPVDLD (83 aa). The segment at 127–148 is disordered; the sequence is WLSSRAVSTHAPPHSVAAPGMP. The region spanning 152–231 is the Doublecortin 2 domain; that stretch reads RSLVVFRNGD…REPFKPGNYD (80 aa). 3 disordered regions span residues 351–373, 1435–1456, and 1583–1613; these read VSKT…RTES, MEEP…SSER, and VTSD…SGEL. Residues 1446–1456 are compositionally biased toward polar residues; it reads SVTNSVTSSER.

In terms of assembly, interacts (via the doublecortin domains) with microtubules. Interacts with RP1L1. Interacts with MAK.

It is found in the cytoplasm. The protein localises to the cytoskeleton. It localises to the cilium axoneme. Its subcellular location is the cell projection. The protein resides in the cilium. It is found in the photoreceptor outer segment. In terms of biological role, microtubule-associated protein regulating the stability and length of the microtubule-based axoneme of photoreceptors. Required for the differentiation of photoreceptor cells, it plays a role in the organization of the outer segment of rod and cone photoreceptors ensuring the correct orientation and higher-order stacking of outer segment disks along the photoreceptor axoneme. This chain is Oxygen-regulated protein 1 (RP1), found in Saimiri boliviensis boliviensis (Bolivian squirrel monkey).